The sequence spans 108 residues: Synaptic plasticity regulator PANTS (108 aa).

The disordered stretch occupies residues 58 to 108 (KNHSTQAKDSLQESERKRLADQRKFTPVWELRQKPPSDWHLPLNQGEPQDP). A compositionally biased stretch (basic and acidic residues) spans 67–81 (SLQESERKRLADQRK).

The protein belongs to the UPF0545 family. In terms of processing, rapidly degraded by proteolysis following neuronal stimulation, resulting in increased AMPA receptor clustering.

The protein resides in the synapse. It localises to the synaptic cleft. Negatively regulates long-term potentiation and modulates adult synaptic plasticity. The chain is Synaptic plasticity regulator PANTS from Danio rerio (Zebrafish).